A 495-amino-acid chain; its full sequence is Protein YhjJ (495 aa).

A signal peptide spans methionine 1–alanine 24.

This sequence belongs to the peptidase M16 family.

It is found in the periplasm. This is Protein YhjJ (yhjJ) from Salmonella typhimurium (strain LT2 / SGSC1412 / ATCC 700720).